We begin with the raw amino-acid sequence, 572 residues long: Sialate:O-sulfotransferase 2 (572 aa).

Topologically, residues 1–18 (MARSLLKIHRYFRRKPVR) are cytoplasmic. The helical; Signal-anchor for type II membrane protein transmembrane segment at 19–39 (FFSFILLYLTAGSLVFLHSGF) threads the bilayer. Residues 40 to 572 (SSDSSTAGIA…SGVPDEYRPR (533 aa)) are Extracellular-facing. WSC domains lie at 134-226 (RAKY…YRLE) and 237-331 (SAIF…YQTQ). 4 N-linked (GlcNAc...) asparagine glycosylation sites follow: asparagine 196, asparagine 249, asparagine 262, and asparagine 561.

Belongs to the WSCD family.

The protein resides in the golgi apparatus membrane. Sialate:O-sulfotransferase which catalyzes 8-O-sulfation at the Sia-glycan level using 3'-phosphoadenosine 5'-phosphosulfate (PAPS) as a donor, forming 8-O-sulfated Sia (Sia8S)-glycans. This chain is Sialate:O-sulfotransferase 2 (wscd2), found in Danio rerio (Zebrafish).